The following is a 221-amino-acid chain: Orotate phosphoribosyltransferase (221 aa).

Lys-26 provides a ligand contact to 5-phospho-alpha-D-ribose 1-diphosphate. 34–35 (FF) is an orotate binding site. Residues 72–73 (YK), Arg-98, Lys-99, Lys-102, His-104, and 123–131 (DDVISAGTS) contribute to the 5-phospho-alpha-D-ribose 1-diphosphate site. The orotate site is built by Ser-127 and Arg-155.

It belongs to the purine/pyrimidine phosphoribosyltransferase family. PyrE subfamily. Homodimer. Mg(2+) is required as a cofactor.

It carries out the reaction orotidine 5'-phosphate + diphosphate = orotate + 5-phospho-alpha-D-ribose 1-diphosphate. It functions in the pathway pyrimidine metabolism; UMP biosynthesis via de novo pathway; UMP from orotate: step 1/2. Catalyzes the transfer of a ribosyl phosphate group from 5-phosphoribose 1-diphosphate to orotate, leading to the formation of orotidine monophosphate (OMP). The protein is Orotate phosphoribosyltransferase of Janthinobacterium sp. (strain Marseille) (Minibacterium massiliensis).